The following is an 819-amino-acid chain: Serine/threonine-protein phosphatase 1 regulatory subunit 10 (819 aa).

The TFIIS N-terminal domain maps to 73–147 (KLLNNWLTYA…NDWMAVIRSQ (75 aa)). Disordered stretches follow at residues 151–204 (QPAD…KFRS), 296–391 (KIKK…RKTV), and 495–785 (SVPD…GGDM). 2 stretches are compositionally biased toward basic and acidic residues: residues 153 to 165 (ADKE…EDAK) and 173 to 190 (KTSE…EKPK). A compositionally biased stretch (polar residues) spans 305 to 327 (SPTSNKASPFDSKSPTEASSLTK). A PP1-binding motif motif is present at residues 386 to 415 (KKRKTVSWPEESRLREYFYFELDETERVNV). Residues 495–504 (SVPDTPHEPD) are compositionally biased toward basic and acidic residues. Composition is skewed to polar residues over residues 533–543 (MDQSTESQSPD) and 560–578 (MGSS…QEIL). The span at 589–604 (KPEDLMKQPDFSEKIK) shows a compositional bias: basic and acidic residues. Residues 606–618 (LLGSLQNQNQNQG) show a composition bias toward low complexity. 2 stretches are compositionally biased toward pro residues: residues 635-663 (FPPP…PGPN) and 670-695 (HGPP…PPPN). Composition is skewed to basic and acidic residues over residues 704-715 (HGGERGGMRGGD) and 758-777 (HGDH…GDHR). Residues 785–813 (MSTRPTCRHFMMKGNCRYENNCAFYHPGI) form a C3H1-type zinc finger.

Component of the PNUTS-PP1 complex (also named PTW/PP1 complex).

It is found in the nucleus. Its subcellular location is the chromosome. Its function is as follows. Substrate-recognition component of the PNUTS-PP1 protein phosphatase complex, a protein phosphatase 1 (PP1) complex that promotes RNA polymerase II transcription pause-release, allowing transcription elongation. Promoter-proximal pausing by RNA polymerase II is a transcription halt following transcription initiation but prior to elongation, which acts as a checkpoint to control that transcripts are favorably configured for transcriptional elongation. The PNUTS-PP1 complex mediates the release of RNA polymerase II from promoter-proximal region of genes by catalyzing dephosphorylation of proteins involved in transcription. In some context, PPP1R10/PNUTS also acts as an inhibitor of protein phosphatase 1 (PP1) activity by preventing access to substrates. The chain is Serine/threonine-protein phosphatase 1 regulatory subunit 10 (ppp1r10) from Xenopus laevis (African clawed frog).